Consider the following 175-residue polypeptide: Small ribosomal subunit protein uS7 (175 aa).

Belongs to the universal ribosomal protein uS7 family. As to quaternary structure, part of the 30S ribosomal subunit. Contacts proteins S9 and S11.

Functionally, one of the primary rRNA binding proteins, it binds directly to 16S rRNA where it nucleates assembly of the head domain of the 30S subunit. Is located at the subunit interface close to the decoding center, probably blocks exit of the E-site tRNA. This Neorickettsia sennetsu (strain ATCC VR-367 / Miyayama) (Ehrlichia sennetsu) protein is Small ribosomal subunit protein uS7.